The sequence spans 326 residues: HTH-type transcriptional regulator BlaA (326 aa).

An HTH lysR-type domain is found at 1–59 (MDVVNACRAFVKVSERGSFTVGAAAAQMSQSVASRRVAALEKHFGERLFDRASRRPSLT). The H-T-H motif DNA-binding region spans 19-38 (FTVGAAAAQMSQSVASRRVA). A disordered region spans residues 289–326 (TADHGPDPATGAGPGADAGTEPGARAEPGAPEEGAQAC). The span at 295 to 326 (DPATGAGPGADAGTEPGARAEPGAPEEGAQAC) shows a compositional bias: low complexity.

The protein belongs to the LysR transcriptional regulatory family.

Positive regulator of the expression of the gene (blaB) for beta-lactamase. It binds to the blaL-blaA intercistronic region. This is HTH-type transcriptional regulator BlaA (blaA) from Streptomyces cacaoi.